A 703-amino-acid chain; its full sequence is Protein teflon (703 aa).

The C2H2-type 1 zinc finger occupies 32–55 (MFCHFCKDIFTHLPEFMRHLQWSH). Disordered regions lie at residues 78–111 (TSED…PGSS), 138–161 (SHEQ…ARKP), and 339–434 (SQQP…SKLE). Composition is skewed to polar residues over residues 84 to 94 (QSQANSCSSGD) and 138 to 147 (SHEQSYSKTP). Positions 148 to 161 (PDSRTEGFRCARKP) are enriched in basic and acidic residues. Polar residues-rich tracts occupy residues 339–352 (SQQP…NNAV) and 364–373 (SLTVISSSPI). 2 consecutive C2H2-type zinc fingers follow at residues 649–672 (YFCE…QSVH) and 677–700 (FTCS…KTVH).

The protein belongs to the Teflon family.

Its subcellular location is the nucleus. The protein localises to the chromosome. Functionally, specifically required in males for proper segregation of autosomal bivalents at meiosis I. Expression is required in the male germ line prior to spermatocyte stage S4. May have a role as a bridging molecule maintaining adhesion to hold autosome bivalents together via heterochromatic connections. This is Protein teflon from Drosophila pseudoobscura pseudoobscura (Fruit fly).